A 418-amino-acid polypeptide reads, in one-letter code: EPS I polysaccharide export inner membrane protein EpsF (418 aa).

A run of 10 helical transmembrane segments spans residues 21–41 (VLVVIGMLLAVPMAFPLFPIA), 45–65 (CAAILAILLPLGRLQHVLATA), 142–162 (PLMVWAILIFISLMLVWIAIY), 170–190 (YVVFVAYLSTITLYALQGSAI), 222–242 (AGTHSSAAALLLVCATVMLFL), 262–282 (LLVLLVLAVAAVAFGSAEFVM), 296–316 (SAWEFQLAVEAVLACLFAWLF), 326–346 (LTYFLFVLLCASTSFFAPAVG), 347–367 (ARLFRYTYCFYIVYLCVFFFA), and 377–397 (KTLASLLFLASLGWAFYIVDV).

It to S.marcescens SfuB.

The protein resides in the cell inner membrane. Functionally, probably involved in polymerization and/or export of exopolysaccharide EPS I which functions as a virulence factor. May play a role in export of EPS I or its intermediates across the membranes. In Ralstonia solanacearum (Pseudomonas solanacearum), this protein is EPS I polysaccharide export inner membrane protein EpsF (epsF).